Here is a 413-residue protein sequence, read N- to C-terminus: Hibernation-specific plasma protein HP-55 (413 aa).

A signal peptide spans 1-24; that stretch reads MPSSISWGLLLLAALSCLGPGSLA. Pyrrolidone carboxylic acid is present on Gln-25. Asn-65, Asn-102, Asn-165, and Asn-266 each carry an N-linked (GlcNAc...) asparagine glycan. The interval 368–387 is RCL; the sequence is GGTVLGAEAMLQAPIMKFDR.

This sequence belongs to the serpin family. In terms of assembly, plasma proteins HP-20, HP-25, HP-27 and HP-55 form a 140 kDa complex via disulfide bonds in the plasma. In terms of processing, the N-terminus is blocked. Plasma; synthesized in the liver.

The protein resides in the secreted. Its function is as follows. Protease inhibitor. The chain is Hibernation-specific plasma protein HP-55 from Tamias sibiricus (Siberian chipmunk).